Consider the following 483-residue polypeptide: MHQMTLAEIARGLAEKKFSSEELTRVLLSRIAQLDPQLNSFISLTEDLAITQAQAADARRAAGENGPLLGAPLAHKDLFCTQGIRTSCGSRMLDNFKAPYDATVVSKLASAGTVTLGKTNMDEFAMGSANESSHYGAVKNPWNLECVPGGSSGGSAAAVAARLLPAATGTDTGGSIRQPAALTNLTGLKPTYGRVSRWGMIAYASSLDQAGPMARTAEDCALLLQGMAGFDPQDSTSIDEPVPDYSASLNTSLKGLRIGVPKEYFSAGLDPRIAQLVHESVKELEKLGAIVKQVSLPNLQHAIPAYYVIAPAEASSNLSRFDGVRFGYRCEDPKDLTDLYKRSRAEGFGPEVQRRIMVGAYALSAGYYDAYYLQAQKIRRLIKNDFMSAFAEVDVILGPTTPNPAWKIGAKTHDPIAQYLEDFYTITANLAGLPGLSMPAGFVDGLPVGVQLLAPYFQEGRLLNVAHQYQQVTDWHTRAPEGF.

Catalysis depends on charge relay system residues lysine 76 and serine 151. The Acyl-ester intermediate role is filled by serine 175.

This sequence belongs to the amidase family. GatA subfamily. In terms of assembly, heterotrimer of A, B and C subunits.

It carries out the reaction L-glutamyl-tRNA(Gln) + L-glutamine + ATP + H2O = L-glutaminyl-tRNA(Gln) + L-glutamate + ADP + phosphate + H(+). Functionally, allows the formation of correctly charged Gln-tRNA(Gln) through the transamidation of misacylated Glu-tRNA(Gln) in organisms which lack glutaminyl-tRNA synthetase. The reaction takes place in the presence of glutamine and ATP through an activated gamma-phospho-Glu-tRNA(Gln). The chain is Glutamyl-tRNA(Gln) amidotransferase subunit A from Pseudomonas syringae pv. tomato (strain ATCC BAA-871 / DC3000).